The following is a 260-amino-acid chain: HTH-type transcriptional repressor NanR (260 aa).

The HTH gntR-type domain occupies 27-95 (KKLSEMVEEE…NGERARISRP (69 aa)). A DNA-binding region (H-T-H motif) is located at residues 55–74 (ERELMAFFNVGRPSVREALA).

It belongs to the NanR family.

Functionally, transcriptional repressor that controls expression of the genes required for the catabolism of sialic acids. The sequence is that of HTH-type transcriptional repressor NanR from Edwardsiella tarda (strain FL6-60).